The sequence spans 282 residues: ATP phosphoribosyltransferase (282 aa).

It belongs to the ATP phosphoribosyltransferase family. Long subfamily. Mg(2+) is required as a cofactor.

It localises to the cytoplasm. The enzyme catalyses 1-(5-phospho-beta-D-ribosyl)-ATP + diphosphate = 5-phospho-alpha-D-ribose 1-diphosphate + ATP. It participates in amino-acid biosynthesis; L-histidine biosynthesis; L-histidine from 5-phospho-alpha-D-ribose 1-diphosphate: step 1/9. Feedback inhibited by histidine. Functionally, catalyzes the condensation of ATP and 5-phosphoribose 1-diphosphate to form N'-(5'-phosphoribosyl)-ATP (PR-ATP). Has a crucial role in the pathway because the rate of histidine biosynthesis seems to be controlled primarily by regulation of HisG enzymatic activity. The chain is ATP phosphoribosyltransferase from Pyrobaculum neutrophilum (strain DSM 2338 / JCM 9278 / NBRC 100436 / V24Sta) (Thermoproteus neutrophilus).